Here is a 292-residue protein sequence, read N- to C-terminus: Undecaprenyl-diphosphatase (292 aa).

The next 7 membrane-spanning stretches (helical) occupy residues 1–21 (MSLV…FLPV), 46–66 (FVTI…RADI), 90–110 (LGWY…LLEH), 114–134 (ALGN…LLAA), 192–212 (FLLS…STVP), 225–245 (VVGT…LLAW), and 253–273 (VFVV…LSGV).

This sequence belongs to the UppP family.

Its subcellular location is the cell inner membrane. It catalyses the reaction di-trans,octa-cis-undecaprenyl diphosphate + H2O = di-trans,octa-cis-undecaprenyl phosphate + phosphate + H(+). Its function is as follows. Catalyzes the dephosphorylation of undecaprenyl diphosphate (UPP). Confers resistance to bacitracin. The chain is Undecaprenyl-diphosphatase from Anaeromyxobacter sp. (strain K).